Consider the following 192-residue polypeptide: Protein GrpE (192 aa).

Belongs to the GrpE family. In terms of assembly, homodimer.

It is found in the cytoplasm. In terms of biological role, participates actively in the response to hyperosmotic and heat shock by preventing the aggregation of stress-denatured proteins, in association with DnaK and GrpE. It is the nucleotide exchange factor for DnaK and may function as a thermosensor. Unfolded proteins bind initially to DnaJ; upon interaction with the DnaJ-bound protein, DnaK hydrolyzes its bound ATP, resulting in the formation of a stable complex. GrpE releases ADP from DnaK; ATP binding to DnaK triggers the release of the substrate protein, thus completing the reaction cycle. Several rounds of ATP-dependent interactions between DnaJ, DnaK and GrpE are required for fully efficient folding. This chain is Protein GrpE, found in Neisseria gonorrhoeae (strain ATCC 700825 / FA 1090).